The following is a 218-amino-acid chain: Large ribosomal subunit protein bL25 (218 aa).

This sequence belongs to the bacterial ribosomal protein bL25 family. CTC subfamily. Part of the 50S ribosomal subunit; part of the 5S rRNA/L5/L18/L25 subcomplex. Contacts the 5S rRNA. Binds to the 5S rRNA independently of L5 and L18.

Its function is as follows. This is one of the proteins that binds to the 5S RNA in the ribosome where it forms part of the central protuberance. In Polaromonas naphthalenivorans (strain CJ2), this protein is Large ribosomal subunit protein bL25.